Consider the following 818-residue polypeptide: MEIELIRKNLDGIRIERRGGLQKRFRIVEPDLQPNETKDKIGNVGKVVRLQSNFTKFSVNKSEKYIMYDTTFSKMGLSPKLKLQILVRICKEYNLPGSFCYDGRRLFTSDNWTEGSDIKEFTIDEKKVSLRLVSTFLSDTEEYYQMINVLLNNLQIIMGQEKIGKGYFLGSNSNKDNVVKNIGPTFFETNNFKVLGGFGTTLQRGTRPNGQLTTLLYIERINRVLNDNSVLVTYNRKNIDQLIGRDILTKYNNKTYRISEIKEMNINETFEMVGRTLSYAQYFKERYNINLTTEQQPFVLTRVKKIARRDKRKEHNENEAPEDMDLTLNITGELCFLCGFSDQEKSNIDLQKNLGCVLKRGPRERLDDIPSFCDWIKTNNNSQGMSNKWGLKIDNTPLEIEGRELPHCDVISGGQRINEKIKDDWKFGKVQFNVQKGVKHEIDVVIVDRNDSQYGNFLNDVEYEIKQLRFDAKIGRVLVCSANDVERSLNDVMRSGSGCAKIALVFVPDDRVYAKVKSFTISTGLLTQCVTTRNGTNRNDKRRQVVSSKTVMQIFSKFGYDPWTIDIKMRPTMIVGMDTFHNKGSKKSIHASVFSINSTFSQYMSFANSPKGKQEFHDTLSGNFKAALTEFKRIYKILPVRIMVYRDGVGDSQLQFTKQFEVDAMKPLVENIYKENGCQVPQIIYVIVKKRIGTKLFNRGDNANPGTIVDKEIVKPNFFEFFLVSQRVTRGTASPTNYNVLEDTRYQNKAGIIEAITPNELQRITYTLTHLYFNWMGTIRVPVPVHYAHKLAELIGKVHKGSTPALINERIRNRLFYL.

Residues arginine 220 to glycine 339 enclose the PAZ domain. One can recognise a Piwi domain in the interval lysine 501–lysine 800.

Belongs to the argonaute family. Piwi subfamily.

This Dugesia japonica (Planarian) protein is Piwi-like protein (iwi).